Consider the following 496-residue polypeptide: probable leucine aminopeptidase 2 (496 aa).

The first 16 residues, 1–16 (MRSLLWASLLSGVLAG), serve as a signal peptide directing secretion. Residues 111 to 205 (PSVEVTADVA…SLEDGQKLIK (95 aa)) enclose the PA domain. A glycan (N-linked (GlcNAc...) asparagine) is linked at Asn-224. Residues His-248 and Asp-260 each coordinate Zn(2+). The active-site Proton acceptor is the Glu-292. Zn(2+) is bound at residue Glu-293. N-linked (GlcNAc...) asparagine glycosylation occurs at Asn-307. Asp-321 contacts Zn(2+). Asn-341 and Asn-402 each carry an N-linked (GlcNAc...) asparagine glycan. His-419 serves as a coordination point for Zn(2+). Residues Asn-424 and Asn-458 are each glycosylated (N-linked (GlcNAc...) asparagine). The interval 475–496 (KRAPKTHAHVSGSGCWHSQVEA) is disordered.

The protein belongs to the peptidase M28 family. M28A subfamily. Monomer. Zn(2+) is required as a cofactor.

It localises to the secreted. In terms of biological role, extracellular aminopeptidase that releases a wide variety of amino acids from natural peptides. In Aspergillus oryzae (strain ATCC 42149 / RIB 40) (Yellow koji mold), this protein is probable leucine aminopeptidase 2 (lap2).